The chain runs to 478 residues: POU domain, class 2, transcription factor 2 (478 aa).

Disordered stretches follow at residues 1–82 (MVHS…PPQA), 167–199 (QAVT…EASD), 275–298 (SSLP…GRRR), 357–391 (PCSA…PLSQ), and 409–478 (TLHP…PYQP). Residues 12–37 (RMSKPLEAEKQGLDSPSEHTDTERNG) show a composition bias toward basic and acidic residues. Polar residues predominate over residues 38-60 (PDTNHQNPQNKTSPFSVSPTGPS). The 75-residue stretch at 195-269 (EEASDLEELE…LLEKWLNDAE (75 aa)) folds into the POU-specific domain. Residues 275–285 (SSLPSPNQLSR) are compositionally biased toward polar residues. A DNA-binding region (homeobox) is located at residues 297–356 (RRKKRTSIETNVRFALEKSFLANQKPTSEEILLIAEQLHMEKEVIRVWFCNRRQKEKRIN). The tract at residues 389-410 (LSQASSSLSTTVTTLSSAVGTL) is leucine-zipper. Over residues 416–425 (AGGGAAGGGA) the composition is skewed to gly residues.

Belongs to the POU transcription factor family. Class-2 subfamily. Interacts with NR3C1, AR and PGR. Interacts with POU2AF1; the interaction increases POU2F2 transactivation activity. As to expression, predominantly expressed in B-cells.

It is found in the nucleus. Its activity is regulated as follows. Transactivation activity is enhanced by transcriptional coactivator POU2AF1. Transcription factor that specifically binds to the octamer motif (5'-ATTTGCAT-3'). Regulates IL6 expression in B cells with POU2AF1. Regulates transcription in a number of tissues in addition to activating immunoglobulin gene expression. Modulates transcription transactivation by NR3C1, AR and PGR. The chain is POU domain, class 2, transcription factor 2 (POU2F2) from Sus scrofa (Pig).